The following is a 393-amino-acid chain: NAD(P)H-quinone oxidoreductase subunit H, chloroplastic (393 aa).

The protein belongs to the complex I 49 kDa subunit family. As to quaternary structure, NDH is composed of at least 16 different subunits, 5 of which are encoded in the nucleus.

It localises to the plastid. It is found in the chloroplast thylakoid membrane. It carries out the reaction a plastoquinone + NADH + (n+1) H(+)(in) = a plastoquinol + NAD(+) + n H(+)(out). The enzyme catalyses a plastoquinone + NADPH + (n+1) H(+)(in) = a plastoquinol + NADP(+) + n H(+)(out). In terms of biological role, NDH shuttles electrons from NAD(P)H:plastoquinone, via FMN and iron-sulfur (Fe-S) centers, to quinones in the photosynthetic chain and possibly in a chloroplast respiratory chain. The immediate electron acceptor for the enzyme in this species is believed to be plastoquinone. Couples the redox reaction to proton translocation, and thus conserves the redox energy in a proton gradient. This chain is NAD(P)H-quinone oxidoreductase subunit H, chloroplastic, found in Ipomoea purpurea (Common morning glory).